We begin with the raw amino-acid sequence, 235 residues long: 6-phosphogluconolactonase (235 aa).

The protein belongs to the glucosamine/galactosamine-6-phosphate isomerase family. 6-phosphogluconolactonase subfamily.

The enzyme catalyses 6-phospho-D-glucono-1,5-lactone + H2O = 6-phospho-D-gluconate + H(+). Its pathway is carbohydrate degradation; pentose phosphate pathway; D-ribulose 5-phosphate from D-glucose 6-phosphate (oxidative stage): step 2/3. In terms of biological role, hydrolysis of 6-phosphogluconolactone to 6-phosphogluconate. In Borreliella burgdorferi (strain ATCC 35210 / DSM 4680 / CIP 102532 / B31) (Borrelia burgdorferi), this protein is 6-phosphogluconolactonase (pgl).